The sequence spans 122 residues: Large ribosomal subunit protein uL14 (122 aa).

The protein belongs to the universal ribosomal protein uL14 family. Part of the 50S ribosomal subunit. Forms a cluster with proteins L3 and L19. In the 70S ribosome, L14 and L19 interact and together make contacts with the 16S rRNA in bridges B5 and B8.

Functionally, binds to 23S rRNA. Forms part of two intersubunit bridges in the 70S ribosome. In Borreliella burgdorferi (strain ZS7) (Borrelia burgdorferi), this protein is Large ribosomal subunit protein uL14.